The following is a 451-amino-acid chain: NADP-specific glutamate dehydrogenase (451 aa).

Residue Lys114 is part of the active site.

It belongs to the Glu/Leu/Phe/Val dehydrogenases family. In terms of assembly, homohexamer.

It catalyses the reaction L-glutamate + NADP(+) + H2O = 2-oxoglutarate + NH4(+) + NADPH + H(+). In Fusarium fujikuroi (Bakanae and foot rot disease fungus), this protein is NADP-specific glutamate dehydrogenase (GDH2).